Here is a 298-residue protein sequence, read N- to C-terminus: 4-hydroxy-tetrahydrodipicolinate synthase (298 aa).

Thr48 contributes to the pyruvate binding site. The Proton donor/acceptor role is filled by Tyr137. The Schiff-base intermediate with substrate role is filled by Lys166. Ile207 lines the pyruvate pocket.

It belongs to the DapA family. In terms of assembly, homotetramer; dimer of dimers.

It localises to the cytoplasm. The enzyme catalyses L-aspartate 4-semialdehyde + pyruvate = (2S,4S)-4-hydroxy-2,3,4,5-tetrahydrodipicolinate + H2O + H(+). It participates in amino-acid biosynthesis; L-lysine biosynthesis via DAP pathway; (S)-tetrahydrodipicolinate from L-aspartate: step 3/4. In terms of biological role, catalyzes the condensation of (S)-aspartate-beta-semialdehyde [(S)-ASA] and pyruvate to 4-hydroxy-tetrahydrodipicolinate (HTPA). This is 4-hydroxy-tetrahydrodipicolinate synthase from Campylobacter jejuni subsp. jejuni serotype O:6 (strain 81116 / NCTC 11828).